The sequence spans 356 residues: Peptide chain release factor 1 (356 aa).

Position 233 is an N5-methylglutamine (Gln233).

The protein belongs to the prokaryotic/mitochondrial release factor family. Post-translationally, methylated by PrmC. Methylation increases the termination efficiency of RF1.

It is found in the cytoplasm. In terms of biological role, peptide chain release factor 1 directs the termination of translation in response to the peptide chain termination codons UAG and UAA. This Shouchella clausii (strain KSM-K16) (Alkalihalobacillus clausii) protein is Peptide chain release factor 1.